Consider the following 251-residue polypeptide: Aquaporin TIP1-1 (251 aa).

Met-1 is modified (N-acetylmethionine). The Cytoplasmic portion of the chain corresponds to 1-23 (MPIRNIAIGRPDEATRPDALKAA). The helical transmembrane segment at 24-44 (LAEFISTLIFVVAGSGSGMAF) threads the bilayer. At 45-56 (NKLTENGATTPS) the chain is on the vacuolar side. The chain crosses the membrane as a helical span at residues 57–77 (GLVAAAVAHAFGLFVAVSVGA). Over 78–103 (NISGGHVNPAVTFGAFIGGNITLLRG) the chain is Cytoplasmic. Positions 85–87 (NPA) match the NPA 1 motif. The helical transmembrane segment at 104–124 (ILYWIAQLLGSVVACLILKFA) threads the bilayer. Topologically, residues 125–143 (TGGLAVPAFGLSAGVGVLN) are vacuolar. A helical membrane pass occupies residues 144–164 (AFVFEIVMTFGLVYTVYATAI). Residues 165-172 (DPKNGSLG) lie on the Cytoplasmic side of the membrane. A helical membrane pass occupies residues 173-193 (TIAPIAIGFIVGANILAGGAF). At 194-218 (SGASMNPAVAFGPAVVSWTWTNHWV) the chain is on the vacuolar side. Positions 199-201 (NPA) match the NPA 2 motif. The chain crosses the membrane as a helical span at residues 219–239 (YWAGPLVGGGIAGLIYEVFFI). At 240–251 (NTTHEQLPTTDY) the chain is on the cytoplasmic side.

The protein belongs to the MIP/aquaporin (TC 1.A.8) family. TIP (TC 1.A.8.10) subfamily. In terms of assembly, interacts with cucumber mosaic virus (CMV) Protein 1a. In terms of tissue distribution, in all the vegetative organs, but not in seeds. Preferentially expressed in roots.

Its subcellular location is the vacuole membrane. In terms of biological role, water channel required to facilitate the transport of water, diffusion of amino acids and/or peptides from the vacuolar compartment to the cytoplasm. Does not promote glycerol permeability. May play a role in the control of cell turgor and cell expansion. Its function is impaired by Hg(2+). May be involved in a vesicle-based metabolite routing through or between pre-vacuolar compartments and the central vacuole. Transports urea in yeast cells in a pH-independent manner. Transports H(2)O(2) in yeast cells. The polypeptide is Aquaporin TIP1-1 (TIP1-1) (Arabidopsis thaliana (Mouse-ear cress)).